Consider the following 471-residue polypeptide: uncharacterized protein (471 aa).

4 helical membrane-spanning segments follow: residues 10–30 (ALWL…LFVI), 46–66 (IDDR…WFAI), 87–107 (TLII…LYFS), and 280–300 (IVVG…LYFA).

Belongs to the bacterial sugar transferase family.

It localises to the cell membrane. It functions in the pathway glycan metabolism; exopolysaccharide biosynthesis. Its function is as follows. May function as a sugar transferase. This is an uncharacterized protein from Haemophilus influenzae (strain ATCC 51907 / DSM 11121 / KW20 / Rd).